Reading from the N-terminus, the 398-residue chain is MTGGQVKVFGKAIQTLSRVSDELWLDPSEKGLALRSVNSCHSTYGYVLFSSVFFQHYQWSPSATITDSDIPLNLNCKLAIKSILPIFRCLNYLERSIEKCTMVARSDRCRVVIQFFGRHGIKRTHNVYFQDCQPLKILFEKSLCANILMIKPRLLAEAIALLTSNQEEVTFSVTPENFCLKSSSGESLDLTSSVYSEMSFGPEEFDFFQVGLDTEITFCFKELKGILTFSEVMHAPIAIYFDFPGKPVVLSVEDMLLEASFILATLLDYPSRTSSPQSLRLSQARRSDPTLSGAQEGKSRVSQTPESISRAAPKRLFPKDPPDSSSAAETRRASASQDDISEVPESVVSDMEEGQSPSPLRKFSCMFFGAVSCEQQEHANHPLGSLAVASDSEQDASG.

The span at 272–281 (RTSSPQSLRL) shows a compositional bias: polar residues. A disordered region spans residues 272 to 359 (RTSSPQSLRL…DMEEGQSPSP (88 aa)). A compositionally biased stretch (low complexity) spans 324–336 (SSSAAETRRASAS). Phosphoserine occurs at positions 349 and 358.

It belongs to the rad9 family. In terms of assembly, interacts with HUS1, HUS1B, RAD1, RAD9A and RAD17.

The sequence is that of Cell cycle checkpoint control protein RAD9B (Rad9b) from Rattus norvegicus (Rat).